The sequence spans 938 residues: Isoleucine--tRNA ligase (938 aa).

Residues 58 to 68 (PYANGNIHIGH) carry the 'HIGH' region motif. An L-isoleucyl-5'-AMP-binding site is contributed by E563. Positions 604 to 608 (KMSKS) match the 'KMSKS' region motif. An ATP-binding site is contributed by K607. 4 residues coordinate Zn(2+): C903, C906, C921, and C924.

It belongs to the class-I aminoacyl-tRNA synthetase family. IleS type 1 subfamily. Monomer. Requires Zn(2+) as cofactor.

It localises to the cytoplasm. The enzyme catalyses tRNA(Ile) + L-isoleucine + ATP = L-isoleucyl-tRNA(Ile) + AMP + diphosphate. In terms of biological role, catalyzes the attachment of isoleucine to tRNA(Ile). As IleRS can inadvertently accommodate and process structurally similar amino acids such as valine, to avoid such errors it has two additional distinct tRNA(Ile)-dependent editing activities. One activity is designated as 'pretransfer' editing and involves the hydrolysis of activated Val-AMP. The other activity is designated 'posttransfer' editing and involves deacylation of mischarged Val-tRNA(Ile). The polypeptide is Isoleucine--tRNA ligase (Buchnera aphidicola subsp. Schizaphis graminum (strain Sg)).